Reading from the N-terminus, the 204-residue chain is Ras-related protein Rab-1D (204 aa).

Residues 17–25 (GDSGVGKSC), 35–42 (WTDTHIST), 65–69 (DTAGQ), 123–126 (NKTD), and 153–155 (SAK) each bind GTP. The Effector region motif lies at 39 to 47 (HISTIGVDF). A compositionally biased stretch (basic and acidic residues) spans 182–191 (PKPDEVDIKS). Residues 182 to 204 (PKPDEVDIKSKNKTKSGGKKSFC) are disordered. Positions 192 to 204 (KNKTKSGGKKSFC) are enriched in basic residues. C204 is lipidated: S-geranylgeranyl cysteine.

The protein belongs to the small GTPase superfamily. Rab family.

It localises to the cell membrane. This is Ras-related protein Rab-1D (rab1D) from Dictyostelium discoideum (Social amoeba).